The primary structure comprises 111 residues: Putative pterin-4-alpha-carbinolamine dehydratase (111 aa).

Belongs to the pterin-4-alpha-carbinolamine dehydratase family.

It catalyses the reaction (4aS,6R)-4a-hydroxy-L-erythro-5,6,7,8-tetrahydrobiopterin = (6R)-L-erythro-6,7-dihydrobiopterin + H2O. The polypeptide is Putative pterin-4-alpha-carbinolamine dehydratase (Alkaliphilus metalliredigens (strain QYMF)).